Reading from the N-terminus, the 459-residue chain is tRNA modification GTPase MnmE (459 aa).

(6S)-5-formyl-5,6,7,8-tetrahydrofolate contacts are provided by arginine 20, glutamate 85, and arginine 124. The TrmE-type G domain maps to 221–380 (GISTVIIGRP…LEEAIQSLFF (160 aa)). Asparagine 231 contacts K(+). Residues 231–236 (NVGKSS), 250–256 (TDIPGTT), and 275–278 (DTAG) each bind GTP. Serine 235 is a binding site for Mg(2+). 3 residues coordinate K(+): threonine 250, isoleucine 252, and threonine 255. Threonine 256 is a Mg(2+) binding site. Position 459 (lysine 459) interacts with (6S)-5-formyl-5,6,7,8-tetrahydrofolate.

Belongs to the TRAFAC class TrmE-Era-EngA-EngB-Septin-like GTPase superfamily. TrmE GTPase family. As to quaternary structure, homodimer. Heterotetramer of two MnmE and two MnmG subunits. K(+) serves as cofactor.

It localises to the cytoplasm. Its function is as follows. Exhibits a very high intrinsic GTPase hydrolysis rate. Involved in the addition of a carboxymethylaminomethyl (cmnm) group at the wobble position (U34) of certain tRNAs, forming tRNA-cmnm(5)s(2)U34. In Bacillus licheniformis (strain ATCC 14580 / DSM 13 / JCM 2505 / CCUG 7422 / NBRC 12200 / NCIMB 9375 / NCTC 10341 / NRRL NRS-1264 / Gibson 46), this protein is tRNA modification GTPase MnmE.